A 276-amino-acid chain; its full sequence is ARL14 effector protein (276 aa).

The interval 159–183 (QTEFAPESGKREKRKLTKNASASSD) is disordered. Lys-176 participates in a covalent cross-link: Glycyl lysine isopeptide (Lys-Gly) (interchain with G-Cter in SUMO2). Phosphoserine is present on residues Ser-182 and Ser-266.

In terms of assembly, interacts with ARL14 and MYO1E.

It is found in the cytoplasm. In terms of biological role, through its interaction with ARL14 and MYO1E, may connect MHC class II-containing cytoplasmic vesicles to the actin network and hence controls the movement of these vesicles along the actin cytoskeleton in dendritic cells. This Rattus norvegicus (Rat) protein is ARL14 effector protein (Arl14ep).